The following is a 304-amino-acid chain: UDP-3-O-acyl-N-acetylglucosamine deacetylase (304 aa).

Residues histidine 78, histidine 237, and aspartate 241 each coordinate Zn(2+). Histidine 264 serves as the catalytic Proton donor.

It belongs to the LpxC family. The cofactor is Zn(2+).

The catalysed reaction is a UDP-3-O-[(3R)-3-hydroxyacyl]-N-acetyl-alpha-D-glucosamine + H2O = a UDP-3-O-[(3R)-3-hydroxyacyl]-alpha-D-glucosamine + acetate. Its pathway is glycolipid biosynthesis; lipid IV(A) biosynthesis; lipid IV(A) from (3R)-3-hydroxytetradecanoyl-[acyl-carrier-protein] and UDP-N-acetyl-alpha-D-glucosamine: step 2/6. Functionally, catalyzes the hydrolysis of UDP-3-O-myristoyl-N-acetylglucosamine to form UDP-3-O-myristoylglucosamine and acetate, the committed step in lipid A biosynthesis. The chain is UDP-3-O-acyl-N-acetylglucosamine deacetylase from Alcanivorax borkumensis (strain ATCC 700651 / DSM 11573 / NCIMB 13689 / SK2).